The chain runs to 443 residues: Nuclear pore complex-interacting protein family member B15 (443 aa).

The first 18 residues, 1 to 18 (MRLRFWLLIWLLLGFISH), serve as a signal peptide directing secretion. A glycan (N-linked (GlcNAc...) asparagine) is linked at asparagine 111. Disordered regions lie at residues 242–262 (RMGR…NSLS) and 330–413 (SPLP…TRHC). Residues 252-262 (QQHSITDNSLS) are compositionally biased toward polar residues. Residues 351-393 (EAEKPPKPKRWRVDEVEQSPKPKRRRADEVEQSPKPKRQREAE) show a composition bias toward basic and acidic residues. Positions 399-412 (KPKRRRLSKLRTRH) are enriched in basic residues.

It belongs to the NPIP family.

It is found in the secreted. This chain is Nuclear pore complex-interacting protein family member B15 (NPIPB15), found in Homo sapiens (Human).